We begin with the raw amino-acid sequence, 155 residues long: MSKKGSYKSVGGDFRYGDESVSRFINAVMLDGKKDVAAKIVYDAFDIIAEKMTGENPLEVYRKAMSNIAPVVEVRSKRVGGATYQIPMEVKSSRRGALAFRWLKLYAAKRGGRSMAEKFAAELMDAANEQGASVKKRDEVHRMADANKAFAHFRF.

Belongs to the universal ribosomal protein uS7 family. As to quaternary structure, part of the 30S ribosomal subunit. Contacts proteins S9 and S11.

In terms of biological role, one of the primary rRNA binding proteins, it binds directly to 16S rRNA where it nucleates assembly of the head domain of the 30S subunit. Is located at the subunit interface close to the decoding center, probably blocks exit of the E-site tRNA. This Chlorobium limicola (strain DSM 245 / NBRC 103803 / 6330) protein is Small ribosomal subunit protein uS7.